The following is an 84-amino-acid chain: Large ribosomal subunit protein bL27 (84 aa).

Residues 1 to 21 form a disordered region; sequence MAHKKAGGSTRNGRDSESKRL.

This sequence belongs to the bacterial ribosomal protein bL27 family.

The protein is Large ribosomal subunit protein bL27 of Baumannia cicadellinicola subsp. Homalodisca coagulata.